The chain runs to 2259 residues: Golgin subfamily A member 4 (2259 aa).

A disordered region spans residues 1 to 54; the sequence is MFKKLKQKISEEQQQLQQALAPAQASSSSSTPTRTRSRTSSFTDQLDDATPNRE. Serine 10 bears the Phosphoserine mark. Residues 12–41 show a composition bias toward low complexity; it reads EQQQLQQALAPAQASSSSSTPTRTRSRTSS. Residue threonine 39 is modified to Phosphothreonine. A phosphoserine mark is found at serine 41, serine 104, and serine 111. Residues 165–235 form an interaction with MACF1 region; it reads SLSREQLLQR…EELQMDQQAK (71 aa). Residues 167–2182 are a coiled coil; sequence SREQLLQRLR…SYEKSVCAAA (2016 aa). Composition is skewed to basic and acidic residues over residues 1932 to 1946 and 1954 to 1977; these read LEDR…HVIE and DGRH…LSKE. The segment at 1932–1977 is disordered; that stretch reads LEDRPEENSKSHVIESKLGTPMDGRHSDLESKLAGSEREKQKLSKE. The GRIP domain occupies 2199–2246; it reads LFGEPTEFEYLRKVLFEYMMGRETKTMAKVITTVLRFPDDQAQKILER.

In terms of assembly, homodimer. Interacts with GTP-bound ARL1 and ARL3. Interacts with MACF1. Directly interacts with TBC1D23. Interacts with FAM91A1; this interaction may be mediated by TBC1D23. Expressed in the head of epididymal sperm but not in testicular sperm (at protein level).

The protein resides in the cytoplasm. The protein localises to the golgi apparatus membrane. It is found in the golgi apparatus. Its subcellular location is the trans-Golgi network membrane. Involved in vesicular trafficking at the Golgi apparatus level. May play a role in delivery of transport vesicles containing GPI-linked proteins from the trans-Golgi network through its interaction with MACF1. Involved in endosome-to-Golgi trafficking. The polypeptide is Golgin subfamily A member 4 (Rattus norvegicus (Rat)).